A 414-amino-acid chain; its full sequence is MKQIRVELINTGTEILLGSIVNTNAAWLGNRLFEAGFRVGRVTVVPDGYAINEAMRESARRADIVIVSGGLGPTSDDVTREALCDVCGVDMHRDEHVAEWLKSYFERRGIPIAECNFKQAMVPDGAAVLENSNGTAPGLVMPASGSLPMFILLPGPPAELKPMVEHSVMPLLEDLADEDIPHLRVFRLVGIGESDLQELVDGSLHQVEGLEVAYCARVGEVDVRLVGSEVALKQGEARLRILAGAYVLAPAGASLEKAVVCHLAQQDLKAATAESCTGGLIAKRITDVPGASGVFEFGWVTYADRAKTEMLGVPENVLKRYGAVSEPVVKAMAEGALERSGADVAVAVSGIAGPGGGTPEKPVGTVWLAWAFRGGETRTEMMLYPRDRSSFRKMVSQRALAGLLDARRKEPVTE.

The protein belongs to the CinA family.

In Akkermansia muciniphila (strain ATCC BAA-835 / DSM 22959 / JCM 33894 / BCRC 81048 / CCUG 64013 / CIP 107961 / Muc), this protein is CinA-like protein.